The sequence spans 344 residues: Phosphoribosylformylglycinamidine cyclo-ligase (344 aa).

This sequence belongs to the AIR synthase family.

It is found in the cytoplasm. The catalysed reaction is 2-formamido-N(1)-(5-O-phospho-beta-D-ribosyl)acetamidine + ATP = 5-amino-1-(5-phospho-beta-D-ribosyl)imidazole + ADP + phosphate + H(+). Its pathway is purine metabolism; IMP biosynthesis via de novo pathway; 5-amino-1-(5-phospho-D-ribosyl)imidazole from N(2)-formyl-N(1)-(5-phospho-D-ribosyl)glycinamide: step 2/2. The sequence is that of Phosphoribosylformylglycinamidine cyclo-ligase from Exiguobacterium sibiricum (strain DSM 17290 / CCUG 55495 / CIP 109462 / JCM 13490 / 255-15).